We begin with the raw amino-acid sequence, 450 residues long: Homogentisate 1,2-dioxygenase (450 aa).

The active-site Proton acceptor is histidine 304. The Fe cation site is built by histidine 347 and glutamate 353. Residues tyrosine 362 and histidine 383 each contribute to the homogentisate site. Histidine 383 lines the Fe cation pocket.

Belongs to the homogentisate dioxygenase family. As to quaternary structure, hexamer; dimer of trimers. Fe cation is required as a cofactor.

It carries out the reaction homogentisate + O2 = 4-maleylacetoacetate + H(+). It participates in amino-acid degradation; L-phenylalanine degradation; acetoacetate and fumarate from L-phenylalanine: step 4/6. Involved in the catabolism of homogentisate (2,5-dihydroxyphenylacetate or 2,5-OH-PhAc), a central intermediate in the degradation of phenylalanine and tyrosine. Catalyzes the oxidative ring cleavage of the aromatic ring of homogentisate to yield maleylacetoacetate. This Burkholderia mallei (strain NCTC 10229) protein is Homogentisate 1,2-dioxygenase.